The sequence spans 603 residues: MNPISTLTLASLIILTLPITTTLLQNNKTNCFLYITKTAVTYAFVISLIPTLLFVQSNQEAYISNWHWMTIHTLKLSLSFKLDFFSLTFMPIALFITWSIMEFSLWYMHSDPHINRFFKYLLLFLITMLILVSANNLLQLFMGWEGVGIMSFLLISWWHGRTDANTAALQAMLYNRIGDMGFIMMMAWFIIHLNSWEFQQIFLTNPKNTTLPLLGLLLASTGKSAQFGLHPWLPSAMEGPTPVSALLHSSTMVMAGVFTLIRFYPLMENNLTVQTSTLCLGAITTLFTAICALTQNDIKKIIALSTSSQLGLMMVTIGINQPHLAFTHMCTHAFFKAMLFLSSGSIIHNLDNEQDIRKMGGLYKTMPITSTAIIIGSLALTGMPFLTGFYSKDPIIETANMSYINTWALLVTLIAVSMTASYSTRIIFFALLGQPRYPTLTRINENNPHLVNPIKRLILGSIFMGFFISMNTIPHTTPQMTMPPHLKFMALAVTLLGFTVATELNNMTHNLMFKQPSRMYTFSTTLGYYPTTTHRILPYLSLTMSQNLATTIMDSIWLEKMIPKNLTTMQKTAASLVSNQKGLMKLYFLSFLLSITLGLLIAL.

Transmembrane regions (helical) follow at residues 4 to 24 (ISTLTLASLIILTLPITTTLL), 35 to 55 (ITKTAVTYAFVISLIPTLLFV), 84 to 104 (FFSLTFMPIALFITWSIMEFS), 121 to 141 (LLLFLITMLILVSANNLLQLF), 177 to 197 (IGDMGFIMMMAWFIIHLNSWE), 213 to 233 (LLGLLLASTGKSAQFGLHPWL), 241 to 261 (TPVSALLHSSTMVMAGVFTLI), 273 to 293 (VQTSTLCLGAITTLFTAICAL), 301 to 320 (IIALSTSSQLGLMMVTIGIN), 325 to 347 (AFTHMCTHAFFKAMLFLSSGSII), 366 to 386 (MPITSTAIIIGSLALTGMPFL), 413 to 433 (LIAVSMTASYSTRIIFFALLG), 457 to 477 (LILGSIFMGFFISMNTIPHTT), 480 to 500 (MTMPPHLKFMALAVTLLGFTV), and 583 to 603 (LMKLYFLSFLLSITLGLLIAL).

It belongs to the complex I subunit 5 family. In terms of assembly, core subunit of respiratory chain NADH dehydrogenase (Complex I) which is composed of 45 different subunits.

Its subcellular location is the mitochondrion inner membrane. It catalyses the reaction a ubiquinone + NADH + 5 H(+)(in) = a ubiquinol + NAD(+) + 4 H(+)(out). Its function is as follows. Core subunit of the mitochondrial membrane respiratory chain NADH dehydrogenase (Complex I) which catalyzes electron transfer from NADH through the respiratory chain, using ubiquinone as an electron acceptor. Essential for the catalytic activity and assembly of complex I. The polypeptide is NADH-ubiquinone oxidoreductase chain 5 (MT-ND5) (Mammuthus primigenius (Siberian woolly mammoth)).